A 260-amino-acid chain; its full sequence is tRNA pseudouridine synthase C (260 aa).

Aspartate 54 is an active-site residue.

The protein belongs to the pseudouridine synthase RluA family.

The catalysed reaction is uridine(65) in tRNA = pseudouridine(65) in tRNA. Its function is as follows. Responsible for synthesis of pseudouridine from uracil-65 in transfer RNAs. The protein is tRNA pseudouridine synthase C (truC) of Escherichia coli (strain K12).